Reading from the N-terminus, the 100-residue chain is Defensin-6 (100 aa).

Residues 1–19 (MRTLTILTAVLLVALQAKA) form the signal peptide. Residues 20 to 68 (EPLQAEDDPLQAKAYEADAQEQRGANDQDFAVSFAEDASSSLRALGSTR) constitute a propeptide that is removed on maturation. 3 cysteine pairs are disulfide-bonded: cysteine 72/cysteine 99, cysteine 74/cysteine 88, and cysteine 78/cysteine 98.

Belongs to the alpha-defensin family. Homodimer. Self-assembles into higher-order oligomers termed nanonets, fibril-like structures that entrap microbes. Self-assembly into nanonets seems to protect against proteolytic digestion in duodenal fluid. Interacts with Y.enterocolitica invasin and S.typhimurium fliC/flagellin; the interaction creates an anchoring site for progressive DEFA6 self-assembly into nanonets. Post-translationally, proteolytically cleaved by trypsin at Arg-68; the propeptide is stored in the tissue of the small intestine and the mature peptide is found in the luminal fluid; cleavage may occur during or after release into the lumen. The N-terminal propeptide region suppresses self-assembly and renders DEFA6 propeptide unable to agglutinate bacteria and protect human epithelial cells from bacterial invasion. Under reducing conditions, naturally present in the gut owing to the low redox potential or enzymatically generated by the thioredoxin system, the disulfide bridges are opened leading to a conformational change of DEF6, thereby changing its antimicrobial spectrum. The reduced form exhibits inhibitory activity against anaerobic bacteria, in contrast to the minimal antimicrobial activity of the disulfide-linked oxidized form. The formation of higher-order nanonets and bacterial entrapment is independent of the redox state. Expressed in Paneth cells of the small intestine (at protein level).

It localises to the secreted. The protein localises to the cytoplasmic vesicle. It is found in the secretory vesicle. Host-defense peptide that contributes to intestinal innate immunity and mediates homeostasis at mucosal surfaces by forming higher-order oligomers that capture bacteria and prevent microbial invasion of the epithelium. After binding to bacterial surface proteins, undergoes ordered self-assembly to form fibril-like nanonets that surround and entangle bacteria and thereby prevent bacterial invasion across the epithelial barrier. Entangles and agglutinates Gram-negative bacteria, such as E.coli, S.typhimurium and Y.enterocolitica, and Gram-positive bacteria such as L.monocytogenes, thereby protecting the intestine against invasion by enteric bacterial pathogens. Blocks adhesion of C.albicans to intestinal epithelial cells and thereby suppresses fungal invasion of epithelial cells and biofilm formation. Under reducing conditions and in an acidic environment similar to the intestinal milieu, exhibits inhibitory activity against anaerobic bacteria such as B.adolescentis, L.acidophilus and B.breve, as well as B.longum and S.thermophilus, possibly by leading to alterations in bacterial cell envelope structures. The disulfide-linked oxidized form exhibits negligible antimicrobial activity against Gram-negative and Gram-positive bacteria, as compared to the enteric defensin DEFA5. The protein is Defensin-6 (DEFA6) of Homo sapiens (Human).